Consider the following 513-residue polypeptide: Maturase K (513 aa).

It belongs to the intron maturase 2 family. MatK subfamily.

It localises to the plastid. It is found in the chloroplast. Its function is as follows. Usually encoded in the trnK tRNA gene intron. Probably assists in splicing its own and other chloroplast group II introns. The chain is Maturase K from Danthonia spicata (Poverty oatgrass).